A 315-amino-acid polypeptide reads, in one-letter code: Lipoyl synthase (315 aa).

[4Fe-4S] cluster is bound by residues Cys62, Cys67, Cys73, Cys88, Cys92, Cys95, and Ser302. The region spanning 74 to 292 (FNHGTATFMI…KIALKLGFIR (219 aa)) is the Radical SAM core domain.

The protein belongs to the radical SAM superfamily. Lipoyl synthase family. It depends on [4Fe-4S] cluster as a cofactor.

The protein resides in the cytoplasm. The enzyme catalyses [[Fe-S] cluster scaffold protein carrying a second [4Fe-4S](2+) cluster] + N(6)-octanoyl-L-lysyl-[protein] + 2 oxidized [2Fe-2S]-[ferredoxin] + 2 S-adenosyl-L-methionine + 4 H(+) = [[Fe-S] cluster scaffold protein] + N(6)-[(R)-dihydrolipoyl]-L-lysyl-[protein] + 4 Fe(3+) + 2 hydrogen sulfide + 2 5'-deoxyadenosine + 2 L-methionine + 2 reduced [2Fe-2S]-[ferredoxin]. The protein operates within protein modification; protein lipoylation via endogenous pathway; protein N(6)-(lipoyl)lysine from octanoyl-[acyl-carrier-protein]: step 2/2. In terms of biological role, catalyzes the radical-mediated insertion of two sulfur atoms into the C-6 and C-8 positions of the octanoyl moiety bound to the lipoyl domains of lipoate-dependent enzymes, thereby converting the octanoylated domains into lipoylated derivatives. The polypeptide is Lipoyl synthase (Vesicomyosocius okutanii subsp. Calyptogena okutanii (strain HA)).